The following is a 130-amino-acid chain: D-ribose pyranase (130 aa).

The Proton donor role is filled by histidine 20. Substrate contacts are provided by residues aspartate 28, histidine 97, and 119–121; that span reads YAN.

The protein belongs to the RbsD / FucU family. RbsD subfamily. As to quaternary structure, homodecamer.

The protein localises to the cytoplasm. It carries out the reaction beta-D-ribopyranose = beta-D-ribofuranose. It participates in carbohydrate metabolism; D-ribose degradation; D-ribose 5-phosphate from beta-D-ribopyranose: step 1/2. Functionally, catalyzes the interconversion of beta-pyran and beta-furan forms of D-ribose. In Bacillus pumilus (strain SAFR-032), this protein is D-ribose pyranase.